Here is a 391-residue protein sequence, read N- to C-terminus: 3-ketoacyl-CoA thiolase (391 aa).

The active-site Acyl-thioester intermediate is Cys-95. Residues His-347 and Cys-377 each act as proton acceptor in the active site.

Belongs to the thiolase-like superfamily. Thiolase family. Heterotetramer of two alpha chains (FadB) and two beta chains (FadA).

It is found in the cytoplasm. It carries out the reaction an acyl-CoA + acetyl-CoA = a 3-oxoacyl-CoA + CoA. It functions in the pathway lipid metabolism; fatty acid beta-oxidation. Catalyzes the final step of fatty acid oxidation in which acetyl-CoA is released and the CoA ester of a fatty acid two carbons shorter is formed. The chain is 3-ketoacyl-CoA thiolase from Pseudomonas putida (Arthrobacter siderocapsulatus).